The chain runs to 233 residues: DNA repair protein RecO (233 aa).

The protein belongs to the RecO family.

Involved in DNA repair and RecF pathway recombination. The protein is DNA repair protein RecO of Psychromonas ingrahamii (strain DSM 17664 / CCUG 51855 / 37).